The sequence spans 421 residues: UDP-N-acetylglucosamine 1-carboxyvinyltransferase (421 aa).

Lysine 22–asparagine 23 lines the phosphoenolpyruvate pocket. A UDP-N-acetyl-alpha-D-glucosamine-binding site is contributed by arginine 93. The active-site Proton donor is cysteine 117. Cysteine 117 bears the 2-(S-cysteinyl)pyruvic acid O-phosphothioketal mark. Residues arginine 122–leucine 126, aspartate 308, and isoleucine 330 each bind UDP-N-acetyl-alpha-D-glucosamine.

This sequence belongs to the EPSP synthase family. MurA subfamily.

The protein localises to the cytoplasm. The enzyme catalyses phosphoenolpyruvate + UDP-N-acetyl-alpha-D-glucosamine = UDP-N-acetyl-3-O-(1-carboxyvinyl)-alpha-D-glucosamine + phosphate. The protein operates within cell wall biogenesis; peptidoglycan biosynthesis. Functionally, cell wall formation. Adds enolpyruvyl to UDP-N-acetylglucosamine. The chain is UDP-N-acetylglucosamine 1-carboxyvinyltransferase from Pseudomonas putida (strain W619).